Reading from the N-terminus, the 362-residue chain is Transcription factor Sox-18 (362 aa).

The span at 1–13 (MHRPEPSYCREEP) shows a compositional bias: basic and acidic residues. The disordered stretch occupies residues 1 to 68 (MHRPEPSYCR…CEEKPGDPRI (68 aa)). The segment covering 37–51 (PSSPPAPDSPTPSPQ) has biased composition (pro residues). Residues 59 to 68 (CEEKPGDPRI) are compositionally biased toward basic and acidic residues. A DNA-binding region (HMG box) is located at residues 68 to 136 (IRRPMNAFMV…QHLQDHPNYK (69 aa)). Interaction with DNA regions lie at residues 70-83 (RPMN…KDER) and 94-106 (HNAV…GQSW). Positions 129–159 (LQDHPNYKYRPRRKKQAKKLKRVDPSPLLRN) are disordered. Residues 135 to 149 (YKYRPRRKKQAKKLK) are compositionally biased toward basic residues. Positions 149–209 (KRVDPSPLLR…VVEPSEPAFF (61 aa)) are important for transcriptional activation. In terms of domain architecture, Sox C-terminal spans 235-361 (KTLREISLPY…TAMYYTPCIT (127 aa)). The 9aaTAD motif lies at 307-315 (NEFDQYLNM).

Its subcellular location is the nucleus. Functionally, transcription factor. Binds to the consensus DNA sequence 5'-AACAAT-3'. Also binds 5'-CACAAT-3' and 5'-AATAAT-3' but with a lower affinity. Acts partially redundantly with sox7 during cardiogenesis, acting indirectly through nodal-signaling to induce mesodermal, organizer and endodermal tissues, which then interact to initiate cardiogenesis. Also acts as an antagonist of beta-catenin signaling. This is Transcription factor Sox-18 from Xenopus tropicalis (Western clawed frog).